Consider the following 878-residue polypeptide: AP-5 complex subunit beta-1 (878 aa).

The interval 234 to 260 (RLQPQAPSWPAAEEGEGERSLTAREHS) is disordered. The span at 250-260 (GERSLTAREHS) shows a compositional bias: basic and acidic residues.

Probably part of the adaptor protein complex 5 (AP-5), a tetramer composed of AP5B1, AP5M1, AP5S1 and AP5Z1. Interacts with ZFYVE26 and SPG11.

In terms of biological role, as part of AP-5, a probable fifth adaptor protein complex it may be involved in endosomal transport. The chain is AP-5 complex subunit beta-1 (AP5B1) from Homo sapiens (Human).